Reading from the N-terminus, the 241-residue chain is MANKREPAPGWPIVSGEYVVGNPESCVGVVTLGSHGLEQACIDAGAAIAGPCHTENLGIEKVVANYISNPNIRFMILCGSEVQGHITGQCFKALWENGIGDDGGIIGAKGAIPFLENVNKEAVERFRRQIVEVVDLIDCEDIGKITQAIKECLSKDPGAIDEDPFIIELEGGKGGGEEEEGVIKPITPEMAIIESRMRLIGNEMCYNGLLAKWQAGYYNGKIQGIATGLFLMLLIMGILMF.

The Cytoplasmic segment spans residues 1–220 (MANKREPAPG…AKWQAGYYNG (220 aa)). Histidine 85 is a 5-hydroxybenzimidazolylcob(I)amide binding site. Residues 221–241 (KIQGIATGLFLMLLIMGILMF) traverse the membrane as a helical segment.

The protein belongs to the MtrA family. The complex is composed of 8 subunits; MtrA, MtrB, MtrC, MtrD, MtrE, MtrF, MtrG and MtrH. Requires 5-hydroxybenzimidazolylcob(I)amide as cofactor.

It localises to the cell membrane. The enzyme catalyses 5-methyl-5,6,7,8-tetrahydromethanopterin + coenzyme M + 2 Na(+)(in) = 5,6,7,8-tetrahydromethanopterin + methyl-coenzyme M + 2 Na(+)(out). The protein operates within one-carbon metabolism; methanogenesis from CO(2); methyl-coenzyme M from 5,10-methylene-5,6,7,8-tetrahydromethanopterin: step 2/2. Part of a complex that catalyzes the formation of methyl-coenzyme M and tetrahydromethanopterin from coenzyme M and methyl-tetrahydromethanopterin. This is an energy-conserving, sodium-ion translocating step. The chain is Tetrahydromethanopterin S-methyltransferase subunit A from Methanocaldococcus jannaschii (strain ATCC 43067 / DSM 2661 / JAL-1 / JCM 10045 / NBRC 100440) (Methanococcus jannaschii).